The sequence spans 179 residues: uncharacterized protein (179 aa).

This is an uncharacterized protein from Acanthamoeba polyphaga mimivirus (APMV).